We begin with the raw amino-acid sequence, 129 residues long: Holo-[acyl-carrier-protein] synthase (129 aa).

Mg(2+) contacts are provided by Asp-8 and Glu-60.

It belongs to the P-Pant transferase superfamily. AcpS family. The cofactor is Mg(2+).

The protein localises to the cytoplasm. The enzyme catalyses apo-[ACP] + CoA = holo-[ACP] + adenosine 3',5'-bisphosphate + H(+). Its function is as follows. Transfers the 4'-phosphopantetheine moiety from coenzyme A to a Ser of acyl-carrier-protein. In Anaeromyxobacter sp. (strain Fw109-5), this protein is Holo-[acyl-carrier-protein] synthase.